A 552-amino-acid polypeptide reads, in one-letter code: ATP synthase subunit alpha (552 aa).

173 to 180 (GDRQTGKT) provides a ligand contact to ATP. The disordered stretch occupies residues 516 to 552 (DGKPLVNEPAPSPLDPGLVRQESIPVHRPAARKDDEG).

This sequence belongs to the ATPase alpha/beta chains family. F-type ATPases have 2 components, CF(1) - the catalytic core - and CF(0) - the membrane proton channel. CF(1) has five subunits: alpha(3), beta(3), gamma(1), delta(1), epsilon(1). CF(0) has three main subunits: a(1), b(2) and c(9-12). The alpha and beta chains form an alternating ring which encloses part of the gamma chain. CF(1) is attached to CF(0) by a central stalk formed by the gamma and epsilon chains, while a peripheral stalk is formed by the delta and b chains.

The protein localises to the cell membrane. The enzyme catalyses ATP + H2O + 4 H(+)(in) = ADP + phosphate + 5 H(+)(out). In terms of biological role, produces ATP from ADP in the presence of a proton gradient across the membrane. The alpha chain is a regulatory subunit. In Frankia casuarinae (strain DSM 45818 / CECT 9043 / HFP020203 / CcI3), this protein is ATP synthase subunit alpha.